The sequence spans 33 residues: Cecropin-B (33 aa).

Residue Lys21 is modified to 5-hydroxylysine.

As to quaternary structure, monomer. Hemolymph.

It localises to the secreted. Its function is as follows. Cecropins have lytic and antibacterial activity against several Gram-positive and Gram-negative bacteria. Also has activity against fungi. In Heliothis virescens (Tobacco budworm moth), this protein is Cecropin-B.